Reading from the N-terminus, the 440-residue chain is Exosome complex component RRP45 (440 aa).

Ser-65 carries the phosphoserine modification. Residue Lys-297 is modified to N6-acetyllysine; alternate. Lys-297 participates in a covalent cross-link: Glycyl lysine isopeptide (Lys-Gly) (interchain with G-Cter in SUMO1); alternate. Lys-297 participates in a covalent cross-link: Glycyl lysine isopeptide (Lys-Gly) (interchain with G-Cter in SUMO2); alternate. Phosphoserine occurs at positions 306 and 346. The tract at residues Glu-341 to Gly-362 is disordered. The span at Ser-353 to Gly-362 shows a compositional bias: acidic residues. 2 positions are modified to phosphoserine: Ser-393 and Ser-395. Residues Glu-404 to Asn-440 are disordered. Residues Pro-425–Asn-440 show a composition bias toward basic residues.

The protein belongs to the RNase PH family. As to quaternary structure, component of the RNA exosome core complex (Exo-9), composed of EXOSC1, EXOSC2, EXOSC3, EXOSC4, EXOSC5, EXOSC6, EXOSC7, EXOSC8 and EXOSC9; within the complex interacts with EXOSC3, EXOSC4, EXOSC5 and DIS3. The catalytically inactive RNA exosome core complex (Exo-9) associates with the catalytic subunit EXOSC10/RRP6. Exo-9 may associate with DIS3 to form the nucleolar exosome complex, or DIS3L to form the cytoplasmic exosome complex. Exo-9 is formed by a hexameric base ring consisting of the heterodimers EXOSC4-EXOSC9, EXOSC5-EXOSC8 and EXOSC6-EXOSC7, and a cap ring consisting of EXOSC1, EXOSC2 and EXOSC3. The RNA exosome complex associates with cofactors C1D/RRP47, MPHOSPH6/MPP6 and MTREX/MTR4. Interacts (via C-terminus region) with SETX (via N-terminus domain); the interaction enhances SETX sumoylation. Interacts with DIS3; the interaction is direct.

The protein resides in the cytoplasm. It is found in the nucleus. Its subcellular location is the nucleolus. It localises to the nucleoplasm. Its function is as follows. Non-catalytic component of the RNA exosome complex which has 3'-&gt;5' exoribonuclease activity and participates in a multitude of cellular RNA processing and degradation events. In the nucleus, the RNA exosome complex is involved in proper maturation of stable RNA species such as rRNA, snRNA and snoRNA, in the elimination of RNA processing by-products and non-coding 'pervasive' transcripts, such as antisense RNA species and promoter-upstream transcripts (PROMPTs), and of mRNAs with processing defects, thereby limiting or excluding their export to the cytoplasm. The RNA exosome may be involved in Ig class switch recombination (CSR) and/or Ig variable region somatic hypermutation (SHM) by targeting AICDA deamination activity to transcribed dsDNA substrates. In the cytoplasm, the RNA exosome complex is involved in general mRNA turnover and specifically degrades inherently unstable mRNAs containing AU-rich elements (AREs) within their 3' untranslated regions, and in RNA surveillance pathways, preventing translation of aberrant mRNAs. It seems to be involved in degradation of histone mRNA. The catalytic inactive RNA exosome core complex of 9 subunits (Exo-9) is proposed to play a pivotal role in the binding and presentation of RNA for ribonucleolysis, and to serve as a scaffold for the association with catalytic subunits and accessory proteins or complexes. EXOSC9 binds to ARE-containing RNAs. In Bos taurus (Bovine), this protein is Exosome complex component RRP45 (EXOSC9).